The following is a 440-amino-acid chain: tRNA-2-methylthio-N(6)-dimethylallyladenosine synthase (440 aa).

The MTTase N-terminal domain occupies 5 to 121; it reads KLLYLETFGC…LPELVRAAEK (117 aa). [4Fe-4S] cluster-binding residues include cysteine 14, cysteine 50, cysteine 84, cysteine 159, cysteine 163, and cysteine 166. The 231-residue stretch at 145–375 folds into the Radical SAM core domain; the sequence is RTDGVSRFVT…LDLQRRITLE (231 aa). The region spanning 378 to 440 is the TRAM domain; that stretch reads KSFVGTVQQV…QNSLQGELCR (63 aa).

This sequence belongs to the methylthiotransferase family. MiaB subfamily. In terms of assembly, monomer. [4Fe-4S] cluster serves as cofactor.

It is found in the cytoplasm. It carries out the reaction N(6)-dimethylallyladenosine(37) in tRNA + (sulfur carrier)-SH + AH2 + 2 S-adenosyl-L-methionine = 2-methylsulfanyl-N(6)-dimethylallyladenosine(37) in tRNA + (sulfur carrier)-H + 5'-deoxyadenosine + L-methionine + A + S-adenosyl-L-homocysteine + 2 H(+). In terms of biological role, catalyzes the methylthiolation of N6-(dimethylallyl)adenosine (i(6)A), leading to the formation of 2-methylthio-N6-(dimethylallyl)adenosine (ms(2)i(6)A) at position 37 in tRNAs that read codons beginning with uridine. The sequence is that of tRNA-2-methylthio-N(6)-dimethylallyladenosine synthase from Geotalea uraniireducens (strain Rf4) (Geobacter uraniireducens).